We begin with the raw amino-acid sequence, 95 residues long: Small ribosomal subunit protein bS6 (95 aa).

Belongs to the bacterial ribosomal protein bS6 family.

In terms of biological role, binds together with bS18 to 16S ribosomal RNA. The polypeptide is Small ribosomal subunit protein bS6 (Geobacillus kaustophilus (strain HTA426)).